The sequence spans 608 residues: Bifunctional dihydrofolate reductase-thymidylate synthase (608 aa).

The DHFR domain occupies 10–228 (DIYAICACCK…TTLDFIIYKK (219 aa)). 14 to 15 (IC) provides a ligand contact to substrate. Position 16 (A16) interacts with NADP(+). A substrate-binding site is contributed by V31. 39-45 (GLGNKGV) is an NADP(+) binding site. Substrate is bound by residues D54 and N108. Residues 106–108 (RTN), 128–130 (SRT), and N144 each bind NADP(+). Substrate is bound by residues I164, Y170, and T185. 165–172 (GGSVVYQE) is an NADP(+) binding site. The interval 322-608 (YHPEYQYLNI…HEKISMDMAA (287 aa)) is thymidylate synthase. Position 345 (R345) interacts with dUMP. The active site involves C490. DUMP contacts are provided by residues H491, 509 to 513 (QRSCD), N521, and 551 to 553 (HVY).

This sequence in the N-terminal section; belongs to the dihydrofolate reductase family. It in the C-terminal section; belongs to the thymidylate synthase family. As to quaternary structure, homodimer.

It carries out the reaction (6S)-5,6,7,8-tetrahydrofolate + NADP(+) = 7,8-dihydrofolate + NADPH + H(+). It catalyses the reaction dUMP + (6R)-5,10-methylene-5,6,7,8-tetrahydrofolate = 7,8-dihydrofolate + dTMP. It functions in the pathway cofactor biosynthesis; tetrahydrofolate biosynthesis; 5,6,7,8-tetrahydrofolate from 7,8-dihydrofolate: step 1/1. Bifunctional enzyme. Involved in de novo dTMP biosynthesis. Key enzyme in folate metabolism. Catalyzes an essential reaction for de novo glycine and purine synthesis, DNA precursor synthesis, and for the conversion of dUMP to dTMP. This Plasmodium falciparum (isolate K1 / Thailand) protein is Bifunctional dihydrofolate reductase-thymidylate synthase.